A 135-amino-acid polypeptide reads, in one-letter code: Aspartate 1-decarboxylase (135 aa).

The active-site Schiff-base intermediate with substrate; via pyruvic acid is Ser25. Residue Ser25 is modified to Pyruvic acid (Ser). Substrate is bound at residue Thr57. Tyr58 acts as the Proton donor in catalysis. Residue 73 to 75 coordinates substrate; sequence GAA.

Belongs to the PanD family. In terms of assembly, heterooctamer of four alpha and four beta subunits. The cofactor is pyruvate. In terms of processing, is synthesized initially as an inactive proenzyme, which is activated by self-cleavage at a specific serine bond to produce a beta-subunit with a hydroxyl group at its C-terminus and an alpha-subunit with a pyruvoyl group at its N-terminus.

Its subcellular location is the cytoplasm. The enzyme catalyses L-aspartate + H(+) = beta-alanine + CO2. The protein operates within cofactor biosynthesis; (R)-pantothenate biosynthesis; beta-alanine from L-aspartate: step 1/1. In terms of biological role, catalyzes the pyruvoyl-dependent decarboxylation of aspartate to produce beta-alanine. This is Aspartate 1-decarboxylase from Mycobacterium sp. (strain JLS).